The following is a 474-amino-acid chain: Dipeptidase A (474 aa).

Residue C6 is part of the active site.

Belongs to the peptidase C69 family. In terms of assembly, homooctamer.

The catalysed reaction is an L-aminoacyl-L-amino acid + H2O = 2 an L-alpha-amino acid. Its activity is regulated as follows. Inhibited by Zn(2+), Cu(2+), Ca(2+) and Cd(2+). In terms of biological role, hydrolyzes a wide range of dipeptides but unable to hydrolyze dipeptides containing proline. Highest activity against Met-Ala. This Lactobacillus helveticus (Lactobacillus suntoryeus) protein is Dipeptidase A (pepDA).